Reading from the N-terminus, the 79-residue chain is MTEQLEFFPVQSPCRGICQSDERGFCRGCFRSRDERFNWNKMSDGEKQEVLRLCRQRLMRKLRVNKPAPSDEPEQPSLF.

This is an uncharacterized protein from Escherichia coli O6:H1 (strain CFT073 / ATCC 700928 / UPEC).